The chain runs to 90 residues: MMKTTIMFMLVVVISLTYSSEEQEVARTYCGAHLANTLADLCFGVEKRSGAQYAPYFWTRQYLGSRGKRGVVDECCFQPCTLDVLLSYCG.

The N-terminal stretch at 1–20 (MMKTTIMFMLVVVISLTYSS) is a signal peptide. Cystine bridges form between cysteine 30-cysteine 76, cysteine 42-cysteine 89, and cysteine 75-cysteine 80. Positions 49–67 (SGAQYAPYFWTRQYLGSRG) are cleaved as a propeptide — c peptide like.

It belongs to the insulin family. Heterodimer of a B chain and an A chain linked by two disulfide bonds.

It localises to the secreted. Functionally, brain peptide responsible for activation of prothoracic glands to produce ecdysone in insects. This chain is Bombyxin B-12 (BBXB12), found in Bombyx mori (Silk moth).